A 1524-amino-acid chain; its full sequence is DNA-directed RNA polymerase subunit beta' (1524 aa).

Positions 58, 60, 73, and 76 each coordinate Zn(2+). D739, D741, and D743 together coordinate Mg(2+). C1112, C1194, C1201, and C1204 together coordinate Zn(2+). Positions 1501–1524 (EAVEAKERPAARRGVKREQPGKQA) are disordered.

This sequence belongs to the RNA polymerase beta' chain family. The RNAP catalytic core consists of 2 alpha, 1 beta, 1 beta' and 1 omega subunit. When a sigma factor is associated with the core the holoenzyme is formed, which can initiate transcription. Mg(2+) serves as cofactor. The cofactor is Zn(2+).

It catalyses the reaction RNA(n) + a ribonucleoside 5'-triphosphate = RNA(n+1) + diphosphate. Its function is as follows. DNA-dependent RNA polymerase catalyzes the transcription of DNA into RNA using the four ribonucleoside triphosphates as substrates. The protein is DNA-directed RNA polymerase subunit beta' of Thermus thermophilus (strain ATCC BAA-163 / DSM 7039 / HB27).